We begin with the raw amino-acid sequence, 186 residues long: Peptide deformylase 2 (186 aa).

Fe cation is bound by residues Cys104 and His146. Glu147 is a catalytic residue. Fe cation is bound at residue His150.

This sequence belongs to the polypeptide deformylase family. Fe(2+) is required as a cofactor.

The catalysed reaction is N-terminal N-formyl-L-methionyl-[peptide] + H2O = N-terminal L-methionyl-[peptide] + formate. Its function is as follows. Removes the formyl group from the N-terminal Met of newly synthesized proteins. Requires at least a dipeptide for an efficient rate of reaction. N-terminal L-methionine is a prerequisite for activity but the enzyme has broad specificity at other positions. This is Peptide deformylase 2 from Streptomyces avermitilis (strain ATCC 31267 / DSM 46492 / JCM 5070 / NBRC 14893 / NCIMB 12804 / NRRL 8165 / MA-4680).